A 513-amino-acid chain; its full sequence is MLRSNVSRIDPKRRNVLDHRKKQFAEAAYKDTDYPHRLNFYSTPPTADITIEQFEQWAIDRLRILAELEACSFRNKTPAETASHMKPLLDKYLPLDTNSSSSSQLFAQRQKDHYSHFILRLAFASTEDLRRRFTRVETMLFRMRLNADDGRERAAFINSLNLDWETVSDEEKRELAAELAATASFGGYKKGQQQQQQYEEDQQTWCKVSWLRVPELVEQRRVFLRQGYAYVPAREQQAMVVSEFSSRLERQLELTARALPRLDEDDRLTPILAHLSKNFITPDASYVGTSSAISSADISARNIDTLVNNHHFPACMSHLHRTLRRDAHLKHYGRLQYTLFLKGIGLNLEECLLFWRQSFNKITDDTFNKEYRYNVRHTYGDVGGDSNRRGGGYSPYSCQKILTEHPPGPGEAHGCPYRHFNMENLQTLLQQGMGVTDRGVLNGVKEDKEKQKFHMACNRVFEHLHKEELKKAKDEGIMTAAQLETIVHPNEYFKRSYLLKNMGKMQGDVKMEG.

[4Fe-4S] cluster is bound by residues Cys315, Cys398, Cys415, and Cys457.

Belongs to the eukaryotic-type primase large subunit family. As to quaternary structure, heterodimer of a small subunit and a large subunit. [4Fe-4S] cluster is required as a cofactor.

Functionally, DNA primase is the polymerase that synthesizes small RNA primers for the Okazaki fragments made during discontinuous DNA replication. This Neurospora crassa (strain ATCC 24698 / 74-OR23-1A / CBS 708.71 / DSM 1257 / FGSC 987) protein is Probable DNA primase large subunit.